Consider the following 49-residue polypeptide: Small ribosomal subunit protein uS19c (49 aa).

Belongs to the universal ribosomal protein uS19 family.

The protein localises to the plastid. The protein resides in the chloroplast. Its function is as follows. Protein S19 forms a complex with S13 that binds strongly to the 16S ribosomal RNA. The polypeptide is Small ribosomal subunit protein uS19c (rps19) (Sinapis alba (White mustard)).